Here is a 127-residue protein sequence, read N- to C-terminus: Glycine cleavage system H protein (127 aa).

The region spanning 22–104 (AVVIGITHFA…YEGAWMVKVE (83 aa)) is the Lipoyl-binding domain. The residue at position 63 (K63) is an N6-lipoyllysine.

Belongs to the GcvH family. In terms of assembly, the glycine cleavage system is composed of four proteins: P, T, L and H. Requires (R)-lipoate as cofactor.

The glycine cleavage system catalyzes the degradation of glycine. The H protein shuttles the methylamine group of glycine from the P protein to the T protein. Its function is as follows. Is also involved in protein lipoylation via its role as an octanoyl/lipoyl carrier protein intermediate. This is Glycine cleavage system H protein from Bacillus mycoides (strain KBAB4) (Bacillus weihenstephanensis).